The following is a 217-amino-acid chain: MOB kinase activator 3A (217 aa).

Positions 83, 88, 165, and 170 each coordinate Zn(2+).

This sequence belongs to the MOB1/phocein family.

Its function is as follows. May regulate the activity of kinases. This is MOB kinase activator 3A (MOB3A) from Bos taurus (Bovine).